We begin with the raw amino-acid sequence, 387 residues long: Exodeoxyribonuclease 7 large subunit (387 aa).

This sequence belongs to the XseA family. Heterooligomer composed of large and small subunits.

The protein localises to the cytoplasm. The catalysed reaction is Exonucleolytic cleavage in either 5'- to 3'- or 3'- to 5'-direction to yield nucleoside 5'-phosphates.. Its function is as follows. Bidirectionally degrades single-stranded DNA into large acid-insoluble oligonucleotides, which are then degraded further into small acid-soluble oligonucleotides. The chain is Exodeoxyribonuclease 7 large subunit from Campylobacter jejuni subsp. doylei (strain ATCC BAA-1458 / RM4099 / 269.97).